Here is a 192-residue protein sequence, read N- to C-terminus: Immunoglobulin superfamily member 23 (192 aa).

A disordered region spans residues 1–26; the sequence is MRAKPQSPLPRNPVPAWSPPTTTTDP. Residues 7–18 show a composition bias toward pro residues; sequence SPLPRNPVPAWS. The Ig-like domain occupies 20–128; the sequence is PTTTTDPMLE…QLVSEPVTIS (109 aa). Residue Asn64 is glycosylated (N-linked (GlcNAc...) asparagine). Residues 158–178 traverse the membrane as a helical segment; that stretch reads LLAAGILGAGALIAGMCFIII.

As to expression, expressed in bone and small intestine. Highly expressed in osteoclasts, and low expressed in osteoblasts and peripheral blood mononuclear cells (PBMCs).

The protein localises to the cell membrane. In terms of biological role, may be involved in osteoclast differentiation. The protein is Immunoglobulin superfamily member 23 of Homo sapiens (Human).